Here is a 305-residue protein sequence, read N- to C-terminus: Coiled-coil domain-containing protein 83 (305 aa).

The segment at 1–25 is disordered; sequence MDSSAKGSKKDAPDGPPKDSKLPVS. Over residues 8–21 the composition is skewed to basic and acidic residues; the sequence is SKKDAPDGPPKDSK. A coiled-coil region spans residues 37 to 186; sequence ENAVERFMFH…LEDEKKRISR (150 aa).

The chain is Coiled-coil domain-containing protein 83 (Ccdc83) from Mus musculus (Mouse).